A 337-amino-acid polypeptide reads, in one-letter code: uncharacterized protein (337 aa).

29–36 (GPKSSGKS) is a binding site for ATP.

This sequence belongs to the archaeal ATPase family.

This is an uncharacterized protein from Methanocaldococcus jannaschii (strain ATCC 43067 / DSM 2661 / JAL-1 / JCM 10045 / NBRC 100440) (Methanococcus jannaschii).